The following is a 119-amino-acid chain: MAQHFRVGRLSQEIQREVNDILLKRVRDPRVKDVTITGVEVSGDLQHATIYYSILSDKASDEKKVQTGLDKATSLIRGELGHRLSIYVTPEIKFERDKSVQYGDHINELLRKLHSTDKF.

This sequence belongs to the RbfA family. Monomer. Binds 30S ribosomal subunits, but not 50S ribosomal subunits or 70S ribosomes.

It localises to the cytoplasm. One of several proteins that assist in the late maturation steps of the functional core of the 30S ribosomal subunit. Associates with free 30S ribosomal subunits (but not with 30S subunits that are part of 70S ribosomes or polysomes). Required for efficient processing of 16S rRNA. May interact with the 5'-terminal helix region of 16S rRNA. The protein is Ribosome-binding factor A of Ligilactobacillus salivarius (strain UCC118) (Lactobacillus salivarius).